The following is a 282-amino-acid chain: Aquaporin PIP-type (282 aa).

The next 2 membrane-spanning stretches (helical) occupy residues 39–61 and 74–96; these read WRAAIAEFIATLLFLYITVATVI and GLLGIAWSFGGMIFVLVYCTAGI. The NPA 1 motif lies at 102 to 104; sequence NPA. The next 4 membrane-spanning stretches (helical) occupy residues 116 to 138, 159 to 181, 201 to 223, and 243 to 265; these read SLLRALVYMIAQCAGAICGVGLV, GYNKGTAFGAELIGTFVLVYTVF, LPIGFAVFMVHLATIPITGTGIN, and HWIFWVGPFVGALAAAAYHQYVL. The NPA 2 motif lies at 223-225; the sequence is NPA.

Belongs to the MIP/aquaporin (TC 1.A.8) family. PIP (TC 1.A.8.11) subfamily.

It localises to the membrane. Its function is as follows. Water-specific channel. This is Aquaporin PIP-type from Atriplex canescens (Fourwing saltbush).